A 422-amino-acid chain; its full sequence is WD repeat and SOCS box-containing protein 1 (422 aa).

5 WD repeats span residues Ser124 to Asn165, Asp168 to Lys208, Gly212 to Lys251, Gly254 to Glu293, and Asp309 to Val346. Residues Asn374 to Met422 form the SOCS box domain.

Component of a probable ECS E3 ubiquitin-protein ligase complex that contains the Elongin BC complex.

It functions in the pathway protein modification; protein ubiquitination. Its function is as follows. Probable substrate-recognition component of a SCF-like ECS (Elongin-Cullin-SOCS-box protein) E3 ubiquitin-protein ligase complex which mediates the ubiquitination and subsequent proteasomal degradation of target proteins. The chain is WD repeat and SOCS box-containing protein 1 (wsb1) from Xenopus tropicalis (Western clawed frog).